We begin with the raw amino-acid sequence, 310 residues long: UPF0761 membrane protein VSAL_I2938 (310 aa).

A run of 6 helical transmembrane segments spans residues 34 to 54, 97 to 117, 136 to 156, 178 to 198, 207 to 227, and 242 to 262; these read YMAYITLLSLVPLVTVLLSVL, MTAVGSGFLFVASVMLISAID, FSLYWMILTLGPLLVWASLAA, LLGWLPIILSFSAFLGLYLLV, HALVGAMSAGCLFEVSKVGFA, and ALAAVPILFVWIYLCWIIVLI.

Belongs to the UPF0761 family.

Its subcellular location is the cell inner membrane. The sequence is that of UPF0761 membrane protein VSAL_I2938 from Aliivibrio salmonicida (strain LFI1238) (Vibrio salmonicida (strain LFI1238)).